A 117-amino-acid polypeptide reads, in one-letter code: Photosystem II reaction center Psb28 protein (117 aa).

It belongs to the Psb28 family. In terms of assembly, part of the photosystem II complex.

It is found in the cellular thylakoid membrane. The protein is Photosystem II reaction center Psb28 protein of Prochlorococcus marinus (strain MIT 9301).